We begin with the raw amino-acid sequence, 300 residues long: Forkhead transcription factor fkh-9 (300 aa).

Residues 66-161 (RPSLSYKDLI…DKQTLRRRNR (96 aa)) constitute a DNA-binding region (fork-head). The tract at residues 153-208 (KQTLRRRNRQQPRALAKKSDAGRTLSRDDRGSSGSGETSPSPSQPSISPPNENPMP) is disordered. Over residues 169–183 (KKSDAGRTLSRDDRG) the composition is skewed to basic and acidic residues. Low complexity predominate over residues 187–198 (SGETSPSPSQPS).

As to expression, expressed in mechanosensory neurons.

The protein resides in the nucleus. In terms of biological role, transcription factor. Binds to the regulatory elements of genes that contain the sequence motif 5'-TTGTTTCT-3'. Involved in regulating intestinal transcription of vitellogenin vit-2, acting in concert with transcription factors elt-2, mab-3 and daf-16, and also the TGF-beta/Sma/Mab pathway. Functions downstream of the insulin/IGF-1-like signaling (IIS) mediated pathway, in regeneration of axons after injury and in short-term memory, perhaps acting in neurons, and in modulation of longevity, perhaps acting non-neuronally. Plays a role in the modulation of endoplasmic reticulum (ER) homeostasis during chemical and pathogen stress, including exposure to the Gram-negative bacterium P.aeruginosa. This chain is Forkhead transcription factor fkh-9, found in Caenorhabditis elegans.